Consider the following 1946-residue polypeptide: 1,3-beta-glucan synthase component (1946 aa).

Disordered stretches follow at residues 1-127 (MSGY…FSDF) and 152-198 (YGEG…KEPY). 3 stretches are compositionally biased toward low complexity: residues 24–34 (GYYQDDQYYDQ), 43–60 (GDHAAQGDHGAQGTQGDG), and 91–109 (DDYYNNNQGYYDGEYNQGY). Positions 165-180 (QLSYGGNRSSGASTPN) are enriched in polar residues. N-linked (GlcNAc...) asparagine glycosylation is found at N171 and N290. The disordered stretch occupies residues 297–316 (KRKAKKGKKKGGEAGNEAET). 6 consecutive transmembrane segments (helical) span residues 489–509 (WFHLLLNFNRIWVIHLTMFWF), 537–557 (FSIVGFGGAIASLIQIFATLA), 576–596 (LLFLIVILVLNVAPGVKVFMF), 618–638 (IGIVHFVIAVFTFLFFSVMPL), 675–695 (FGLWLTVFGAKFGESYVYLTL), and 734–754 (IVLILMTFTDLIFFFLDTYLF). N-linked (GlcNAc...) asparagine glycosylation is found at N1017 and N1312. 5 consecutive transmembrane segments (helical) span residues 1356-1376 (NMFIMLSVQSFMLTLMSIGAL), 1413-1433 (CIISIFFVFFISFVPLIVQEL), 1500-1520 (FAGQSIYFGARLLMMLLFATS), 1523-1543 (WQPALTYFWIVLLGLIISPFL), and 1615-1635 (IFLTEILTPLLLAATTTVAYL). An N-linked (GlcNAc...) asparagine glycan is attached at N1649. A run of 5 helical transmembrane segments spans residues 1667–1687 (LAVVAFAPIGINAGVLAAMFG), 1703–1723 (FGPVLAGIAHGAAAVFMIIFF), 1738–1758 (LAGIIAAMCIQRFIFKLIVSL), 1803–1823 (FSADFILGHWILFMMAPLILI), and 1864–1884 (AILYFVLFIIFLALVVAPGVI). N-linked (GlcNAc...) asparagine glycosylation is present at N1918. Positions 1920–1946 (TEGKTETGTKAGGADASATDASKLRLF) are disordered. Residues 1925-1940 (ETGTKAGGADASATDA) are compositionally biased toward low complexity.

This sequence belongs to the glycosyltransferase 48 family. Component of the 1,3-beta-glucan synthase (GS) complex composed of a catalytic subunit GLS1 and a regulatory subunit RHO1.

The protein localises to the membrane. Its subcellular location is the cell membrane. The enzyme catalyses [(1-&gt;3)-beta-D-glucosyl](n) + UDP-alpha-D-glucose = [(1-&gt;3)-beta-D-glucosyl](n+1) + UDP + H(+). Its activity is regulated as follows. Activated by iron ions. Inhibited by manganese, copper and zinc ions. In terms of biological role, catalytic subunit of the 1,3-beta-glucan synthase (GS). Synthesizes 1,3-beta-glucan, a major structural component of the fungal cell wall. Involved in cell wall synthesis, maintenance and remodeling. In Cordyceps militaris (strain CM01) (Caterpillar fungus), this protein is 1,3-beta-glucan synthase component.